The following is a 691-amino-acid chain: MGQALGIKSCDFQAARNNEEHHTKALSSRRLFVRRGQPFTIILYFRAPVRAFLPALKKVALTAQTGEQPSKINRTQATFPISSLGDRKWWSAVVEERDAQSWTISVTTPADAVIGHYSLLLQVSGRKQLLLGQFTLLFNPWNREDAVFLKNEAQRMEYLLNQNGLIYLGTADCIQAESWDFGQFEGDVIDLSLRLLSKDKQVEKWSQPVHVARVLGALLHFLKEQRVLPTPQTQATQEGALLNKRRGSVPILRQWLTGRGRPVYDGQAWVLAAVACTVLRCLGIPARVVTTFASAQGTGGRLLIDEYYNEEGLQNGEGQRGRIWIFQTSTECWMTRPALPQGYDGWQILHPSAPNGGGVLGSCDLVPVRAVKEGTLGLTPAVSDLFAAINASCVVWKCCEDGTLELTDSNTKYVGNNISTKGVGSDRCEDITQNYKYPEGSLQEKEVLERVEKEKMEREKDNGIRPPSLETASPLYLLLKAPSSLPLRGDAQISVTLVNHSEQEKAVQLAIGVQAVHYNGVLAAKLWRKKLHLTLSANLEKIITIGLFFSNFERNPPENTFLRLTAMATHSESNLSCFAQEDIAICRPHLAIKMPEKAEQYQPLTASVSLQNSLDAPMEDCVISILGRGLIHRERSYRFRSVWPENTMCAKFQFTPTHVGLQRLTVEVDCNMFQNLTNYKSVTVVAPELSA.

A lipid anchor (N-myristoyl glycine) is attached at glycine 2. The band 3 binding stretch occupies residues 31–39 (LFVRRGQPF). Serine 248 carries the phosphoserine; by PKA modification.

It belongs to the transglutaminase superfamily. Transglutaminase family. Component of the ankyrin-1 complex in the erythrocyte, composed of ANK1, RHCE, RHAG, SLC4A1, EPB42, GYPA, GYPB and AQP1. Interacts with SLC4A1 (via the cytoplasmic domain); this interaction is mediated by the SLC4A1 Band 3-I dimer. Interacts with ANK1 (via ANK 1-13 repeats). Interacts with AQP1 (via the C-terminal). Both cAMP-dependent kinase (CAPK) and another kinase present in the red-blood cells seem to be able to phosphorylate EPB42.

Its subcellular location is the cell membrane. It localises to the cytoplasm. The protein localises to the cytoskeleton. In terms of biological role, component of the ankyrin-1 complex, a multiprotein complex involved in the stability and shape of the erythrocyte membrane. This chain is Protein 4.2, found in Homo sapiens (Human).